The following is a 476-amino-acid chain: Bifunctional protein HldE (476 aa).

The tract at residues 1 to 319 is ribokinase; the sequence is MKVTLPAFEK…GALASHQGES (319 aa). 195 to 198 serves as a coordination point for ATP; sequence NMSE. Residue Asp-264 is part of the active site. The cytidylyltransferase stretch occupies residues 345–476; that stretch reads MTNGCFDILH…SIIQNIMARQ (132 aa).

This sequence in the N-terminal section; belongs to the carbohydrate kinase PfkB family. It in the C-terminal section; belongs to the cytidylyltransferase family. Homodimer.

It carries out the reaction D-glycero-beta-D-manno-heptose 7-phosphate + ATP = D-glycero-beta-D-manno-heptose 1,7-bisphosphate + ADP + H(+). The enzyme catalyses D-glycero-beta-D-manno-heptose 1-phosphate + ATP + H(+) = ADP-D-glycero-beta-D-manno-heptose + diphosphate. Its pathway is nucleotide-sugar biosynthesis; ADP-L-glycero-beta-D-manno-heptose biosynthesis; ADP-L-glycero-beta-D-manno-heptose from D-glycero-beta-D-manno-heptose 7-phosphate: step 1/4. It functions in the pathway nucleotide-sugar biosynthesis; ADP-L-glycero-beta-D-manno-heptose biosynthesis; ADP-L-glycero-beta-D-manno-heptose from D-glycero-beta-D-manno-heptose 7-phosphate: step 3/4. Catalyzes the phosphorylation of D-glycero-D-manno-heptose 7-phosphate at the C-1 position to selectively form D-glycero-beta-D-manno-heptose-1,7-bisphosphate. Its function is as follows. Catalyzes the ADP transfer from ATP to D-glycero-beta-D-manno-heptose 1-phosphate, yielding ADP-D-glycero-beta-D-manno-heptose. The chain is Bifunctional protein HldE from Shewanella denitrificans (strain OS217 / ATCC BAA-1090 / DSM 15013).